The sequence spans 199 residues: Thymidine kinase (199 aa).

Residues 23 to 30 and 95 to 98 contribute to the ATP site; these read GSMFSGKT and DEAQ. E96 (proton acceptor) is an active-site residue. The Zn(2+) site is built by C152, C155, C184, and C187.

Belongs to the thymidine kinase family. In terms of assembly, homotetramer.

The protein resides in the cytoplasm. The enzyme catalyses thymidine + ATP = dTMP + ADP + H(+). This Bacteroides fragilis (strain YCH46) protein is Thymidine kinase.